We begin with the raw amino-acid sequence, 192 residues long: Thymidine kinase (192 aa).

ATP contacts are provided by residues glycine 9 to threonine 16 and aspartate 85 to glutamine 88. The active-site Proton acceptor is the glutamate 86. Cysteine 143, cysteine 146, cysteine 180, and histidine 183 together coordinate Zn(2+).

Belongs to the thymidine kinase family. Homotetramer.

The protein localises to the cytoplasm. It catalyses the reaction thymidine + ATP = dTMP + ADP + H(+). In Lactiplantibacillus plantarum (strain ATCC BAA-793 / NCIMB 8826 / WCFS1) (Lactobacillus plantarum), this protein is Thymidine kinase.